Reading from the N-terminus, the 160-residue chain is Eukaryotic translation initiation factor 5A (160 aa).

The segment covering 1-12 (MSDEEHHFESKA) has biased composition (basic and acidic residues). The disordered stretch occupies residues 1–21 (MSDEEHHFESKADAGASKTFP). Position 52 is a hypusine (lysine 52).

It belongs to the eIF-5A family. In terms of processing, lys-53 undergoes hypusination, a unique post-translational modification that consists in the addition of a butylamino group from spermidine to lysine side chain, leading to the formation of the unusual amino acid hypusine. eIF-5As are the only known proteins to undergo this modification, which is essential for their function.

In terms of biological role, translation factor that promotes translation elongation and termination, particularly upon ribosome stalling at specific amino acid sequence contexts. Binds between the exit (E) and peptidyl (P) site of the ribosome and promotes rescue of stalled ribosome: specifically required for efficient translation of polyproline-containing peptides as well as other motifs that stall the ribosome. Acts as a ribosome quality control (RQC) cofactor by joining the RQC complex to facilitate peptidyl transfer during CAT tailing step. The chain is Eukaryotic translation initiation factor 5A from Manihot esculenta (Cassava).